A 176-amino-acid chain; its full sequence is NAD(P)H-quinone oxidoreductase subunit 6, chloroplastic (176 aa).

Transmembrane regions (helical) follow at residues 10 to 30 (FLLV…VLLT), 32 to 52 (PIYS…FYIL), 61 to 81 (AQLL…VMFM), 92 to 112 (LWTV…VSLM), and 152 to 172 (FFLP…GAIA).

It belongs to the complex I subunit 6 family. In terms of assembly, NDH is composed of at least 16 different subunits, 5 of which are encoded in the nucleus.

The protein localises to the plastid. It is found in the chloroplast thylakoid membrane. The catalysed reaction is a plastoquinone + NADH + (n+1) H(+)(in) = a plastoquinol + NAD(+) + n H(+)(out). It carries out the reaction a plastoquinone + NADPH + (n+1) H(+)(in) = a plastoquinol + NADP(+) + n H(+)(out). Its function is as follows. NDH shuttles electrons from NAD(P)H:plastoquinone, via FMN and iron-sulfur (Fe-S) centers, to quinones in the photosynthetic chain and possibly in a chloroplast respiratory chain. The immediate electron acceptor for the enzyme in this species is believed to be plastoquinone. Couples the redox reaction to proton translocation, and thus conserves the redox energy in a proton gradient. This Eucalyptus globulus subsp. globulus (Tasmanian blue gum) protein is NAD(P)H-quinone oxidoreductase subunit 6, chloroplastic (ndhG).